The primary structure comprises 1663 residues: Glutamine-rich protein 2 (1663 aa).

Disordered regions lie at residues 80 to 239 (HGGF…LVPA), 423 to 481 (GLVQ…GTGQ), 575 to 615 (AQPR…QHGL), 880 to 925 (TYQQ…QVYP), and 948 to 984 (RGPGYLSADQHGQEGLDPNRTRASDRHGIPAQKAPGQ). Composition is skewed to polar residues over residues 84 to 103 (TSLTSPEGTLSGDSTKQPSI) and 131 to 150 (GVSSREQSKVPSGTGRQQQP). The span at 171-182 (SDSDRHRSREKL) shows a compositional bias: basic and acidic residues. Over residues 206–217 (QPSSVPASQSQV) the composition is skewed to low complexity. The segment covering 958–975 (HGQEGLDPNRTRASDRHG) has biased composition (basic and acidic residues). Coiled coils occupy residues 1085–1160 (KTVK…MENS) and 1286–1325 (EDHRQKQKDIAMLYQGLEKLEKEKANREHLEMEIDVKADK). The span at 1609 to 1619 (TRLPGILRKDS) shows a compositional bias: basic and acidic residues. A disordered region spans residues 1609 to 1663 (TRLPGILRKDSSGTSKRKSQQPRPHVHRPPSLSSNGQLPSRPQSAQISAGNTSER). Over residues 1623-1636 (SKRKSQQPRPHVHR) the composition is skewed to basic residues. Over residues 1639-1663 (SLSSNGQLPSRPQSAQISAGNTSER) the composition is skewed to polar residues.

As to quaternary structure, interacts with AKAP3, ODF2 and TSSK4. Interacts with AKAP4. As to expression, expressed in the sperm.

The protein localises to the nucleus membrane. The protein resides in the nucleus. It is found in the cytoplasm. Its subcellular location is the cell projection. It localises to the cilium. The protein localises to the flagellum. Its function is as follows. Has an essential role in the formation of sperm flagella and flagellar structure maintainance. It acts as a suppressor of ubiquitination and degradation of proteins involved in flagellar development and motility. This chain is Glutamine-rich protein 2 (QRICH2), found in Homo sapiens (Human).